The following is a 250-amino-acid chain: MPNDNRLAPAALAAQAAALPAAWRHVLEQPAVARAFASVLGHVEQRLAEGAVVYPAAPFRALDQLAPADVRVVILGQDPYHGPGQAQGLAFSVPDDCKCPPSLRNIFNEIAVDYPRPTRHDLSAWTRQGVLLLNTSLTVEDGQPGSHAKRGWETVTDALIAEVARDPSPKVFLLWGAHAQAKQALVPADAGHLVLAANHPSPLSARRPPVPFVGCGHFRQTNAWLQQRGQKPVDWSGEQNNASRQGEFAL.

Residue Asp-78 is the Proton acceptor of the active site. The interval 228-250 (RGQKPVDWSGEQNNASRQGEFAL) is disordered.

Belongs to the uracil-DNA glycosylase (UDG) superfamily. UNG family.

The protein resides in the cytoplasm. The enzyme catalyses Hydrolyzes single-stranded DNA or mismatched double-stranded DNA and polynucleotides, releasing free uracil.. Its function is as follows. Excises uracil residues from the DNA which can arise as a result of misincorporation of dUMP residues by DNA polymerase or due to deamination of cytosine. This Bordetella pertussis (strain Tohama I / ATCC BAA-589 / NCTC 13251) protein is Uracil-DNA glycosylase.